Consider the following 206-residue polypeptide: Ras-related protein Rab-18 (206 aa).

Met-1 is modified (N-acetylmethionine). GTP is bound by residues Ser-17, Gly-20, Lys-21, Ser-22, Ser-23, Asp-34, Pro-35, Thr-40, Gly-66, Lys-123, and Asp-125. Ser-22 is a Mg(2+) binding site. 2 consecutive short sequence motifs (switch) follow at residues 31-45 and 63-80; these read DTFD…GVDF and DTAG…YYRG. A Mg(2+)-binding site is contributed by Thr-40. Ser-144 carries the post-translational modification Phosphoserine. Ala-152 is a binding site for GTP. The S-palmitoyl cysteine moiety is linked to residue Cys-199. Cys-203 is modified (cysteine methyl ester). Cys-203 carries S-geranylgeranyl cysteine lipidation. Residues 204–206 constitute a propeptide, removed in mature form; it reads SVL.

Belongs to the small GTPase superfamily. Rab family. As to quaternary structure, interacts (in GTP-bound form) with ZFYVE1. Interacts with ZW10 and this interaction is enhanced in the presence of ZFYVE1. Interacts with BSCL2. Mg(2+) serves as cofactor.

It is found in the endoplasmic reticulum membrane. The protein localises to the golgi apparatus. It localises to the cis-Golgi network membrane. Its subcellular location is the lipid droplet. The protein resides in the apical cell membrane. The catalysed reaction is GTP + H2O = GDP + phosphate + H(+). Its activity is regulated as follows. Regulated by guanine nucleotide exchange factors (GEFs) which promote the exchange of bound GDP for free GTP. Regulated by GTPase activating proteins (GAPs) which increase the GTP hydrolysis activity at the ER membrane. Inhibited by GDP dissociation inhibitors (GDIs) which prevent Rab-GDP dissociation. Its function is as follows. The small GTPases Rab are key regulators of intracellular membrane trafficking, from the formation of transport vesicles to their fusion with membranes. Rabs cycle between an inactive GDP-bound form and an active GTP-bound form that is able to recruit to membranes different sets of downstream effectors directly responsible for vesicle formation, movement, tethering and fusion. RAB18 is required for the localization of ZFYVE1 to lipid droplets and for its function in mediating the formation of endoplasmic reticulum-lipid droplets (ER-LD) contacts. Also required for maintaining endoplasmic reticulum structure. Plays a role in apical endocytosis/recycling. Plays a key role in eye and brain development and neurodegeneration. The sequence is that of Ras-related protein Rab-18 from Rattus norvegicus (Rat).